The primary structure comprises 805 residues: MAFSPWQILSPVQWAKWTWSAVRGGAAGEDEAGGPEGDPEEEDSQAETKSLSFSSDSEGNFETPEAETPIRSPFKESCDPSLGLAGPGAKSQESQEADEQLVAEVVEKCSSKTCSKPSENEVPQQAIDSHSVKNFREEPEHDFSKISIVRPFSIETKDSTDISAVLGTKAAHGCVTAVSGKALPSSPPDALQDEAMTEGSMGVTLEASAEADLKAGNSCPELVPSRRSKLRKPKPVPLRKKAIGGEFSDTNAAVEGTPLPKASYHFSPEELDENTSPLLGDARFQKSPPDLKETPGTLSSDTNDSGVELGEESRSSPLKLEFDFTEDTGNIEARKALPRKLGRKLGSTLTPKIQKDGISKSAGLEQPTDPVARDGPLSQTSSKPDPSQWESPSFNPFGSHSVLQNSPPLSSEGSYHFDPDNFDESMDPFKPTTTLTSSDFCSPTGNHVNEILESPKKAKSRLITSGCKVKKHETQSLALDACSRDEGAVISQISDISNRDGHATDEEKLASTSCGQKSAGAEVKGEPEEDLEYFECSNVPVSTINHAFSSSEAGIEKETCQKMEEDGSTVLGLLESSAEKAPVSVSCGGESPLDGICLSESDKTAVLTLIREEIITKEIEANEWKKKYEETRQEVLEMRKIVAEYEKTIAQMIEDEQRTSMTSQKSFQQLTMEKEQALADLNSVERSLSDLFRRYENLKGVLEGFKKNEEALKKCAQDYLARVKQEEQRYQALKIHAEEKLDKANEEIAQVRTKAKAESAALHAGLRKEQMKVESLERALQQKNQEIEELTKICDELIAKLGKTD.

A2 carries the N-acetylalanine modification. A lipid anchor (N-myristoyl glycine) is attached at A2. The interaction with LSM7 and SNRPG stretch occupies residues 2 to 55 (AFSPWQILSPVQWAKWTWSAVRGGAAGEDEAGGPEGDPEEEDSQAETKSLSFSS). Phosphoserine occurs at positions 4, 10, and 44. The interval 23–140 (RGGAAGEDEA…SVKNFREEPE (118 aa)) is disordered. Positions 28–45 (GEDEAGGPEGDPEEEDSQ) are enriched in acidic residues. Composition is skewed to polar residues over residues 47–60 (ETKSLSFSSDSEGN) and 111–128 (SKTCSKPSENEVPQQAID). Basic and acidic residues predominate over residues 130 to 140 (HSVKNFREEPE). Residues S147 and S153 each carry the phosphoserine modification. Residues 152 to 259 (FSIETKDSTD…TNAAVEGTPL (108 aa)) are interaction with TDRD7. The tract at residues 206–427 (EASAEADLKA…DPDNFDESMD (222 aa)) is interaction with YEATS4. 2 SPAZ domains span residues 215 to 297 (AGNS…TPGT) and 359 to 507 (SKSA…TDEE). A disordered region spans residues 215-457 (AGNSCPELVP…VNEILESPKK (243 aa)). The Bipartite nuclear localization signal 1 signature appears at 226–241 (RRSKLRKPKPVPLRKK). Residues 226–242 (RRSKLRKPKPVPLRKKA) are compositionally biased toward basic residues. S228 bears the Phosphoserine; by AURKC mark. A phosphoserine mark is found at S248 and S276. Composition is skewed to polar residues over residues 296–305 (GTLSSDTNDS), 377–413 (LSQTSSKPDPSQWESPSFNPFGSHSVLQNSPPLSSEG), and 431–447 (PTTTLTSSDFCSPTGNH). Phosphoserine is present on residues S381 and S406. A Bipartite nuclear localization signal 2 motif is present at residues 455 to 471 (PKKAKSRLITSGCKVKK). The residue at position 483 (S483) is a Phosphoserine. The disordered stretch occupies residues 493 to 526 (ISDISNRDGHATDEEKLASTSCGQKSAGAEVKGE). A compositionally biased stretch (basic and acidic residues) spans 497–509 (SNRDGHATDEEKL). Phosphotyrosine is present on Y533. S591 is modified (phosphoserine). A coiled-coil region spans residues 610–805 (IREEIITKEI…ELIAKLGKTD (196 aa)). The tract at residues 701-805 (VLEGFKKNEE…ELIAKLGKTD (105 aa)) is interaction with CH-TOG.

This sequence belongs to the TACC family. In terms of assembly, interacts with KIAA0097/CH-TOG and with the oncogenic transcription factor YEATS4. Interacts with AURKA, AURKB and AURKC. Interacts with LSM7, TDRD7 and SNRPG. Interacts with GCN5L2 and PCAF. Interacts with the thyroid hormone receptors THRB and THRA, predominantly with isoform alpha-2. The interaction with THRA isoform alpha-1 and THRB is decreased in the presence of thyroid hormone T3. Also interacts with other nuclear receptors, including ESR1, NR3C1, PPARG, RARA and RXRA, preferentially in the absence of their hormonal ligands. In terms of processing, isoform 1 is heavily phosphorylated; isoform 6 is not. Isoform 1, isoform 3 and isoform 5 are ubiquitous. Isoform 2 is strongly expressed in the brain, weakly detectable in lung and colon, and overexpressed in gastric cancer. Isoform 4 is not detected in normal tissues, but strong expression was found in gastric cancer tissues. Down-regulated in a subset of cases of breast cancer.

It is found in the cytoplasm. Its subcellular location is the nucleus. The protein localises to the cytoskeleton. It localises to the microtubule organizing center. The protein resides in the centrosome. It is found in the midbody. Its subcellular location is the membrane. Its function is as follows. Involved in transcription regulation induced by nuclear receptors, including in T3 thyroid hormone and all-trans retinoic acid pathways. Might promote the nuclear localization of the receptors. Likely involved in the processes that promote cell division prior to the formation of differentiated tissues. This Homo sapiens (Human) protein is Transforming acidic coiled-coil-containing protein 1 (TACC1).